The primary structure comprises 326 residues: MNPLTKVKLINELNEREVQLGVAEKVSWHSEYKHSAWIFVGGLPYELTEGDIICVFSQYGEIVNINLVRDKKTGKSKGFCFLCYEDQRSTVLAVDNFNGIKIKGRTIRVDHVSNYRAPQESEDVDDVTRELQEKGCGVKTPPSSPPEVSEDEDAKLTKKHKKDKKEKKKRKKEKTEGQAQAEQPSCSRSATVKEKKDERASRKHSSKTSERAQKSEHRESKKSHSGSPDGRSSYHARAEDPECKARKEKPKHEHKSASRREAEEKSRERERGRSSGTHSGRHRGHSDGRSHRSRSRSRSPDKSHRHKKYRHSRERDSYHGSDRRHH.

Residue Lys8 forms a Glycyl lysine isopeptide (Lys-Gly) (interchain with G-Cter in SUMO2) linkage. Positions 36–114 constitute an RRM domain; the sequence is AWIFVGGLPY…RTIRVDHVSN (79 aa). Residues 117 to 326 are disordered; the sequence is APQESEDVDD…SYHGSDRRHH (210 aa). Thr140 is subject to Phosphothreonine. Ser149 carries the phosphoserine modification. Residues 157–172 show a composition bias toward basic residues; that stretch reads TKKHKKDKKEKKKRKK. Residues 177–190 are compositionally biased toward polar residues; the sequence is GQAQAEQPSCSRSA. Basic and acidic residues-rich tracts occupy residues 191-200, 207-219, 236-245, and 255-273; these read TVKEKKDERA, KTSE…EHRE, ARAEDPECKA, and KSAS…ERGR. Phosphoserine is present on Ser274. The segment covering 291–312 has biased composition (basic residues); sequence HRSRSRSRSPDKSHRHKKYRHS. The segment covering 313–326 has biased composition (basic and acidic residues); it reads RERDSYHGSDRRHH.

The protein belongs to the IST3 family. As to quaternary structure, part of the activated spliceosome B/catalytic step 1 spliceosome, one of the forms of the spliceosome which has a well-formed active site but still cannot catalyze the branching reaction and is composed of at least 52 proteins, the U2, U5 and U6 snRNAs and the pre-mRNA. Component of the minor spliceosome, which splices U12-type introns.

Its subcellular location is the nucleus. Functionally, involved in pre-mRNA splicing as component of the activated spliceosome. As a component of the minor spliceosome, involved in the splicing of U12-type introns in pre-mRNAs. The polypeptide is RNA-binding motif protein, X-linked 2 (Rbmx2) (Mus musculus (Mouse)).